Reading from the N-terminus, the 152-residue chain is Large ribosomal subunit protein bL9 (152 aa).

It belongs to the bacterial ribosomal protein bL9 family.

Binds to the 23S rRNA. This Chlorobaculum tepidum (strain ATCC 49652 / DSM 12025 / NBRC 103806 / TLS) (Chlorobium tepidum) protein is Large ribosomal subunit protein bL9.